Here is a 597-residue protein sequence, read N- to C-terminus: Arginine--tRNA ligase (597 aa).

Positions 125–135 match the 'HIGH' region motif; it reads PNTNKPLHLGH.

Belongs to the class-I aminoacyl-tRNA synthetase family. In terms of assembly, monomer.

Its subcellular location is the cytoplasm. It catalyses the reaction tRNA(Arg) + L-arginine + ATP = L-arginyl-tRNA(Arg) + AMP + diphosphate. The polypeptide is Arginine--tRNA ligase (Bacteroides fragilis (strain YCH46)).